Consider the following 220-residue polypeptide: Putative amino-acid transporter YisU (220 aa).

A run of 6 helical transmembrane segments spans residues 15–35, 67–87, 89–109, 128–148, 161–181, and 195–215; these read FFSM…ILPL, TLLI…LPVF, TVMM…TWNI, AFAA…IGVI, WLFM…LAIA, and MLIV…YFGV.

This sequence belongs to the LysE/ArgO transporter (TC 2.A.75) family.

The protein localises to the cell membrane. The sequence is that of Putative amino-acid transporter YisU (yisU) from Bacillus subtilis (strain 168).